The primary structure comprises 437 residues: ATP-dependent RNA helicase RhlB (437 aa).

Positions 9 to 37 (QKFADLGLKPQVTEGLEKKGFEYCTPIQA) match the Q motif motif. The Helicase ATP-binding domain maps to 40 to 219 (LPVLLTGQDI…FEHMHNPEHV (180 aa)). Position 53–60 (53–60 (AQTGTGKT)) interacts with ATP. Positions 165-168 (DEAD) match the DEAD box motif. Residues 245–390 (ALLQTLIEEE…VSDYDASALI (146 aa)) enclose the Helicase C-terminal domain. A disordered region spans residues 395-437 (APLRMRAPRTQQRRTNTGGTRSGNRKPQGRRPRQPRQSAPKQS). The span at 403-413 (RTQQRRTNTGG) shows a compositional bias: low complexity. A compositionally biased stretch (basic residues) spans 417 to 428 (GNRKPQGRRPRQ).

The protein belongs to the DEAD box helicase family. RhlB subfamily. Component of the RNA degradosome, which is a multiprotein complex involved in RNA processing and mRNA degradation.

It localises to the cytoplasm. It catalyses the reaction ATP + H2O = ADP + phosphate + H(+). DEAD-box RNA helicase involved in RNA degradation. Has RNA-dependent ATPase activity and unwinds double-stranded RNA. The polypeptide is ATP-dependent RNA helicase RhlB (Vibrio campbellii (strain ATCC BAA-1116)).